Consider the following 59-residue polypeptide: Large ribosomal subunit protein uL30 (59 aa).

This sequence belongs to the universal ribosomal protein uL30 family. In terms of assembly, part of the 50S ribosomal subunit.

This Streptococcus agalactiae serotype Ia (strain ATCC 27591 / A909 / CDC SS700) protein is Large ribosomal subunit protein uL30.